The sequence spans 325 residues: Probable cell division protein WhiA (325 aa).

A DNA-binding region (H-T-H motif) is located at residues serine 273–asparagine 306.

This sequence belongs to the WhiA family.

Involved in cell division and chromosome segregation. The polypeptide is Probable cell division protein WhiA (Frankia alni (strain DSM 45986 / CECT 9034 / ACN14a)).